Here is a 225-residue protein sequence, read N- to C-terminus: 2-C-methyl-D-erythritol 4-phosphate cytidylyltransferase (225 aa).

The protein belongs to the IspD/TarI cytidylyltransferase family. IspD subfamily.

The catalysed reaction is 2-C-methyl-D-erythritol 4-phosphate + CTP + H(+) = 4-CDP-2-C-methyl-D-erythritol + diphosphate. The protein operates within isoprenoid biosynthesis; isopentenyl diphosphate biosynthesis via DXP pathway; isopentenyl diphosphate from 1-deoxy-D-xylulose 5-phosphate: step 2/6. Catalyzes the formation of 4-diphosphocytidyl-2-C-methyl-D-erythritol from CTP and 2-C-methyl-D-erythritol 4-phosphate (MEP). The polypeptide is 2-C-methyl-D-erythritol 4-phosphate cytidylyltransferase (Cereibacter sphaeroides (strain KD131 / KCTC 12085) (Rhodobacter sphaeroides)).